A 90-amino-acid polypeptide reads, in one-letter code: Probable Fe(2+)-trafficking protein (90 aa).

This sequence belongs to the Fe(2+)-trafficking protein family. Monomer.

In terms of biological role, could be a mediator in iron transactions between iron acquisition and iron-requiring processes, such as synthesis and/or repair of Fe-S clusters in biosynthetic enzymes. The sequence is that of Probable Fe(2+)-trafficking protein from Yersinia enterocolitica serotype O:8 / biotype 1B (strain NCTC 13174 / 8081).